Consider the following 918-residue polypeptide: Glutamate receptor ionotropic, kainate 1 (918 aa).

The first 30 residues, 1–30 (MEHGTLLAQPGLWTRDTSWALLYFLCYILP), serve as a signal peptide directing secretion. Residues 31 to 576 (QTAPQVLRIG…VFSFLNPLSP (546 aa)) lie on the Extracellular side of the membrane. Residues asparagine 68, asparagine 74, asparagine 276, asparagine 379, asparagine 428, asparagine 439, and asparagine 446 are each glycosylated (N-linked (GlcNAc...) asparagine). Proline 531, threonine 533, and arginine 538 together coordinate L-glutamate. Asparagine 561 is a glycosylation site (N-linked (GlcNAc...) asparagine). Residues 577 to 597 (DIWMYVLLACLGVSCVLFVIA) traverse the membrane as a helical segment. Residues 598 to 653 (RFTPYEWYNPHPCNPDSDVVENNFTLLNSFWFGVGALMQQGSELMPKALSTRIVGG) are Cytoplasmic-facing. Residues 654 to 674 (IWWFFTLIIISSYTANLAAFL) traverse the membrane as a helical segment. Topologically, residues 675–834 (TVERMESPID…KEASALGVEN (160 aa)) are extracellular. Serine 704 and threonine 705 together coordinate L-glutamate. At serine 725 the chain carries Phosphoserine; by PKC. Glutamate 753 serves as a coordination point for L-glutamate. Threonine 761 carries the post-translational modification Phosphothreonine; by PKC. A disulfide bond links cysteine 765 and cysteine 819. A glycan (N-linked (GlcNAc...) asparagine) is linked at asparagine 766. Residues 835–855 (IGGIFIVLAAGLVLSVFVAIG) traverse the membrane as a helical segment. Topologically, residues 856–918 (EFIYKSRKNN…IRKQSSVHTV (63 aa)) are cytoplasmic.

This sequence belongs to the glutamate-gated ion channel (TC 1.A.10.1) family. GRIK1 subfamily. In terms of assembly, homotetramer or heterotetramer of pore-forming glutamate receptor subunits. Tetramers may be formed by the dimerization of dimers. Can form functional heteromeric receptors with GRIK5. Can form functional heteromeric receptors with GRIK4. Interacts with KLHL17.

The protein localises to the cell membrane. The protein resides in the postsynaptic cell membrane. The catalysed reaction is Ca(2+)(in) = Ca(2+)(out). Its function is as follows. Ionotropic glutamate receptor that functions as a cation-permeable ligand-gated ion channel, gated by L-glutamate and the glutamatergic agonist kainic acid. L-glutamate acts as an excitatory neurotransmitter at many synapses in the central nervous system. Binding of the excitatory neurotransmitter L-glutamate induces a conformation change, leading to the opening of the cation channel, and thereby converts the chemical signal to an electrical impulse. The receptor then desensitizes rapidly and enters a transient inactive state, characterized by the presence of bound agonist. Functionally, ionotropic glutamate receptor that functions as a cation-permeable ligand-gated ion channel, gated by L-glutamate and the glutamatergic agonist kainic acid. This is Glutamate receptor ionotropic, kainate 1 (GRIK1) from Homo sapiens (Human).